Here is a 369-residue protein sequence, read N- to C-terminus: Phenylalanine--tRNA ligase alpha subunit (369 aa).

Residue Glu269 participates in Mg(2+) binding.

Belongs to the class-II aminoacyl-tRNA synthetase family. Phe-tRNA synthetase alpha subunit type 1 subfamily. As to quaternary structure, tetramer of two alpha and two beta subunits. It depends on Mg(2+) as a cofactor.

It localises to the cytoplasm. The enzyme catalyses tRNA(Phe) + L-phenylalanine + ATP = L-phenylalanyl-tRNA(Phe) + AMP + diphosphate + H(+). This Brucella anthropi (strain ATCC 49188 / DSM 6882 / CCUG 24695 / JCM 21032 / LMG 3331 / NBRC 15819 / NCTC 12168 / Alc 37) (Ochrobactrum anthropi) protein is Phenylalanine--tRNA ligase alpha subunit.